We begin with the raw amino-acid sequence, 111 residues long: Nucleoid-associated protein Cag_1190 (111 aa).

This sequence belongs to the YbaB/EbfC family. As to quaternary structure, homodimer.

The protein resides in the cytoplasm. It is found in the nucleoid. Functionally, binds to DNA and alters its conformation. May be involved in regulation of gene expression, nucleoid organization and DNA protection. The sequence is that of Nucleoid-associated protein Cag_1190 from Chlorobium chlorochromatii (strain CaD3).